Consider the following 721-residue polypeptide: Dipeptidyl-peptidase 5 (721 aa).

The signal sequence occupies residues 1–18; the sequence is MGAFRWLSIAAAASTALA. N-linked (GlcNAc...) asparagine glycans are attached at residues Asn75, Asn94, Asn151, and Asn254. The tract at residues 271-297 is disordered; it reads ARPINGPDSPGTPKGIKGDSSSPVFSP. N-linked (GlcNAc...) asparagine glycosylation is found at Asn380 and Asn450. Catalysis depends on Ser560, which acts as the Charge relay system. The N-linked (GlcNAc...) asparagine glycan is linked to Asn607. Residues Asp643 and His675 each act as charge relay system in the active site.

This sequence belongs to the peptidase S9C family. N-glycosylated. As to expression, expressed in mycelia and conidia.

The protein resides in the secreted. May be involved in metabolism of dipeptides or may affect host defense mechanisms. Has a substrate specificity limited to the hydrolysis of X-Ala, His-Ser, and Ser-Tyr dipeptides at a neutral pH optimum. This is Dipeptidyl-peptidase 5 from Aspergillus fumigatus (strain CBS 144.89 / FGSC A1163 / CEA10) (Neosartorya fumigata).